We begin with the raw amino-acid sequence, 504 residues long: Maturase K (504 aa).

Belongs to the intron maturase 2 family. MatK subfamily.

The protein resides in the plastid. Its subcellular location is the chloroplast. Usually encoded in the trnK tRNA gene intron. Probably assists in splicing its own and other chloroplast group II introns. The sequence is that of Maturase K from Lablab purpureus (Hyacinth bean).